The chain runs to 424 residues: Histidine--tRNA ligase (424 aa).

The protein belongs to the class-II aminoacyl-tRNA synthetase family. Homodimer.

It is found in the cytoplasm. The catalysed reaction is tRNA(His) + L-histidine + ATP = L-histidyl-tRNA(His) + AMP + diphosphate + H(+). The sequence is that of Histidine--tRNA ligase from Escherichia coli O139:H28 (strain E24377A / ETEC).